Here is a 146-residue protein sequence, read N- to C-terminus: Large ribosomal subunit protein bL21 (146 aa).

A compositionally biased stretch (basic residues) spans 95-104 (PKKKTRRKMG). The tract at residues 95–146 (PKKKTRRKMGHRQELTRVMVKSISISKSTPKSSPKTEATKKSTSSKASKPEN) is disordered. Residues 115 to 146 (KSISISKSTPKSSPKTEATKKSTSSKASKPEN) show a composition bias toward low complexity.

It belongs to the bacterial ribosomal protein bL21 family. In terms of assembly, part of the 50S ribosomal subunit. Contacts protein L20.

This protein binds to 23S rRNA in the presence of protein L20. This Prochlorococcus marinus (strain MIT 9515) protein is Large ribosomal subunit protein bL21.